Consider the following 463-residue polypeptide: Glycine--tRNA ligase (463 aa).

Substrate contacts are provided by arginine 98 and glutamate 174. ATP is bound by residues 206 to 208 (RNE), 216 to 221 (FRTREF), 290 to 291 (EL), and 334 to 337 (GADR). 221–225 (FEQME) contacts substrate. 330–334 (EPSLG) contributes to the substrate binding site.

Belongs to the class-II aminoacyl-tRNA synthetase family. As to quaternary structure, homodimer.

The protein resides in the cytoplasm. It catalyses the reaction tRNA(Gly) + glycine + ATP = glycyl-tRNA(Gly) + AMP + diphosphate. Functionally, catalyzes the attachment of glycine to tRNA(Gly). The polypeptide is Glycine--tRNA ligase (Staphylococcus haemolyticus (strain JCSC1435)).